The sequence spans 2181 residues: Non-reducing polyketide synthase dpmaA (2181 aa).

The tract at residues 74–180 is N-terminal acylcarrier protein transacylase domain (SAT); sequence QWVKGNSTQP…LALCCGAYID (107 aa). A Ketosynthase family 3 (KS3) domain is found at 347–779; it reads QAQLLVLGPV…GTNAAMLVCQ (433 aa). Residues Cys525, His661, and His702 each act as for beta-ketoacyl synthase activity in the active site. Residues 891–1193 are malonyl-CoA:ACP transacylase (MAT) domain; it reads VLAGQTGRRV…SFYPAALGEP (303 aa). The active-site For acyl/malonyl transferase activity is Ser977. The N-terminal hotdog fold stretch occupies residues 1269-1401; sequence VSLIGKTQNA…GVITLQEVYS (133 aa). The PKS/mFAS DH domain occupies 1269–1579; that stretch reads VSLIGKTQNA…FQKIAISSLK (311 aa). Residues 1276 to 1573 are product template (PT) domain; sequence QNAGVQTVEY…TILGAKFQKI (298 aa). The interval 1425–1579 is C-terminal hotdog fold; that stretch reads SASVVQGDFI…FQKIAISSLK (155 aa). Polar residues predominate over residues 1587-1603; sequence GVPQTSGGRTPSSSITE. Disordered regions lie at residues 1587–1618 and 1652–1675; these read GVPQ…PIPG and ISGS…AMET. Residues 1653–1670 are compositionally biased toward low complexity; sequence SGSSRSTSSSPPSLESRS. Positions 1677-1753 constitute a Carrier domain; that stretch reads EITEGAGSAL…TLFHTIFPQQ (77 aa). Ser1713 carries the post-translational modification O-(pantetheine 4'-phosphoryl)serine. The interval 1982-2164 is methyltransferase (CMeT) domain; it reads EFMNCLFSYN…QSGFDHIDWT (183 aa).

It participates in secondary metabolite biosynthesis; terpenoid biosynthesis. Non-reducing polyketide synthase; part of the gene cluster that mediates the biosynthesis of the diterpenoid pyrones subglutinols A and B. The first step of the pathway is the synthesis of the alpha-pyrone moiety by the polyketide synthase dpmaA via condensation of one acetyl-CoA starter unit with 3 malonyl-CoA units and 2 methylations. The alpha-pyrone is then combined with geranylgeranyl pyrophosphate (GGPP) formed by the GGPP synthase dpmaD through the action of the prenyltransferase dpmaC to yield a linear alpha-pyrone diterpenoid. Subsequent steps in the diterpenoid pyrone biosynthetic pathway involve the decalin core formation, which is initiated by the epoxidation of the C10-C11 olefin by the FAD-dependent oxidoreductase dpmaE, and is followed by a cyclization cascade catalyzed by the terpene cyclase dpmaB. The dehydrogenase dpmaF is then involved in tetrahydrofuran (THF) ring formation at the C5 unit to complete the formation of subglutinols A and B. This chain is Non-reducing polyketide synthase dpmaA, found in Metarhizium anisopliae (Entomophthora anisopliae).